Here is a 236-residue protein sequence, read N- to C-terminus: Purine nucleoside phosphorylase DeoD-type (236 aa).

His5 serves as a coordination point for a purine D-ribonucleoside. Phosphate is bound by residues Gly21, Arg25, Arg44, and 88–91 (RVGT). Residues 180–182 (EME) and 204–205 (SD) contribute to the a purine D-ribonucleoside site. The active-site Proton donor is Asp205.

The protein belongs to the PNP/UDP phosphorylase family. Homohexamer; trimer of homodimers.

It carries out the reaction a purine D-ribonucleoside + phosphate = a purine nucleobase + alpha-D-ribose 1-phosphate. It catalyses the reaction a purine 2'-deoxy-D-ribonucleoside + phosphate = a purine nucleobase + 2-deoxy-alpha-D-ribose 1-phosphate. In terms of biological role, catalyzes the reversible phosphorolytic breakdown of the N-glycosidic bond in the beta-(deoxy)ribonucleoside molecules, with the formation of the corresponding free purine bases and pentose-1-phosphate. The protein is Purine nucleoside phosphorylase DeoD-type of Shewanella baltica (strain OS223).